The primary structure comprises 352 residues: C-C chemokine receptor type 5 (352 aa).

The Extracellular segment spans residues 1-30 (MDYQVSSPTYDIDYYTSEPCQKINVKQIAA). Residue Y3 is modified to Sulfotyrosine. O-linked (GalNAc...) serine glycans are attached at residues S6 and S7. Sulfotyrosine is present on residues Y10, Y14, and Y15. 2 cysteine pairs are disulfide-bonded: C20-C269 and C101-C178. A helical membrane pass occupies residues 31–58 (RLLPPLYSLVFIFGFVGNMLVILILINC). The Cytoplasmic segment spans residues 59 to 68 (KRLKSMTDIY). A helical transmembrane segment spans residues 69-89 (LLNLAISDLFFLLTVPFWAHY). Topologically, residues 90 to 102 (AAAQWDFGNTMCQ) are extracellular. Residues 103–124 (LLTGLYFIGFFSGIFFIILLTI) form a helical membrane-spanning segment. Residues 125 to 141 (DRYLAIVHAVFALKART) lie on the Cytoplasmic side of the membrane. Residues 142–166 (VTFGVVTSVITWVVAVFASLPGIIF) traverse the membrane as a helical segment. Topologically, residues 167-198 (TRSQKEGLHYTCSSHFPYSQYQFWKNFQTLKI) are extracellular. A helical membrane pass occupies residues 199 to 218 (VILGLVLPLLVMVICYSGIL). At 219–235 (KTLLRCRNEKKRHRAVR) the chain is on the cytoplasmic side. Residues 236 to 260 (LIFTIMIVYFLFWAPYNIVLLLNTF) form a helical membrane-spanning segment. Residues 261-277 (QEFFGLNNCSSSNRLDQ) are Extracellular-facing. A helical membrane pass occupies residues 278–301 (AMQVTETLGMTHCCINPIIYAFVG). The Cytoplasmic portion of the chain corresponds to 302–352 (EKFRNYLLVFFQKHIAKRFCKCCSIFQQEAPERASSVYTRSTGEQEISVGL). S-palmitoyl cysteine attachment occurs at residues C321, C323, and C324. A phosphoserine; by BARK1 mark is found at S336, S337, S342, and S349.

The protein belongs to the G-protein coupled receptor 1 family. In terms of assembly, interacts with PRAF2. Efficient ligand binding to CCL3/MIP-1alpha and CCL4/MIP-1beta requires sulfation, O-glycosylation and sialic acid modifications. Glycosylation on Ser-6 is required for efficient binding of CCL4. Interacts with GRK2. Interacts with ARRB1 and ARRB2. Interacts with CNIH4. Interacts with S100A4; this interaction stimulates T-lymphocyte chemotaxis. Post-translationally, sulfated on at least 2 of the N-terminal tyrosines. Sulfation is required for efficient binding of the chemokines, CCL3 and CCL4. In terms of processing, palmitoylation in the C-terminal is important for cell surface expression. Phosphorylation on serine residues in the C-terminal is stimulated by binding CC chemokines especially by APO-RANTES. Post-translationally, O-glycosylated, but not N-glycosylated. Ser-6 appears to be the major site even if Ser-7 may be also O-glycosylated. Also sialylated glycans present which contribute to chemokine binding. Thr-16 and Ser-17 may also be glycosylated and, if so, with small moieties such as a T-antigen.

It is found in the cell membrane. In terms of biological role, receptor for a number of inflammatory CC-chemokines including CCL3/MIP-1-alpha, CCL4/MIP-1-beta and RANTES and subsequently transduces a signal by increasing the intracellular calcium ion level. May play a role in the control of granulocytic lineage proliferation or differentiation. Participates in T-lymphocyte migration to the infection site by acting as a chemotactic receptor. This chain is C-C chemokine receptor type 5 (CCR5), found in Pongo abelii (Sumatran orangutan).